Reading from the N-terminus, the 622-residue chain is Probable ATP-citrate synthase (622 aa).

ATP-binding positions include 228 to 248 and 279 to 305; these read ALRY…ELGG and FPTE…KNKA. Residue Glu245 coordinates Mg(2+). The Tele-phosphohistidine intermediate role is filled by His287. Residue 306–316 participates in CoA binding; sequence LREAGAVVPTS.

This sequence in the N-terminal section; belongs to the succinate/malate CoA ligase beta subunit family. It in the C-terminal section; belongs to the succinate/malate CoA ligase alpha subunit family. As to quaternary structure, homotetramer.

It is found in the cytoplasm. The enzyme catalyses oxaloacetate + acetyl-CoA + ADP + phosphate = citrate + ATP + CoA. In terms of biological role, catalyzes the cleavage of citrate into oxaloacetate and acetyl-CoA, the latter serving as common substrate in multiple biochemical reactions in protein, carbohydrate and lipid metabolism. This is Probable ATP-citrate synthase (acly) from Dictyostelium discoideum (Social amoeba).